The primary structure comprises 225 residues: Adenylate kinase (225 aa).

10-15 (GSGKGT) is an ATP binding site. Positions 30-59 (ESGAIFRENISKGTEIGKKAKEYIDRGDLV) are NMP. AMP is bound by residues Ser-31, Arg-36, 57–59 (DLV), 85–88 (GFPR), and Gln-92. The interval 126–165 (GRRLCENDNNHPNNIFIDAIKPDGDKCRVCGGALSARSDD) is LID. Arg-127 serves as a coordination point for ATP. The AMP site is built by Arg-162 and Arg-174. Pro-211 is an ATP binding site.

This sequence belongs to the adenylate kinase family. In terms of assembly, monomer.

It is found in the cytoplasm. It carries out the reaction AMP + ATP = 2 ADP. The protein operates within purine metabolism; AMP biosynthesis via salvage pathway; AMP from ADP: step 1/1. Functionally, catalyzes the reversible transfer of the terminal phosphate group between ATP and AMP. Plays an important role in cellular energy homeostasis and in adenine nucleotide metabolism. The sequence is that of Adenylate kinase from Desulfatibacillum aliphaticivorans.